Here is a 195-residue protein sequence, read N- to C-terminus: DnaJ homolog subfamily C member 5 (195 aa).

A J domain is found at 13–82 (GDSLYIVLGL…RNIYDKYGSL (70 aa)). Residues 162 to 195 (DMEKEGDGAIVVQPTSATETTQLTSDSHPSYHTE) are disordered. Positions 174 to 189 (QPTSATETTQLTSDSH) are enriched in polar residues.

In terms of processing, palmitoylated. Palmitoylation occurs probably in the cysteine-rich domain and regulates DNAJC5 stable membrane attachment.

It is found in the cytoplasm. The protein localises to the cytosol. Its subcellular location is the membrane. The protein resides in the cytoplasmic vesicle. It localises to the secretory vesicle. It is found in the chromaffin granule membrane. The protein localises to the melanosome. Its subcellular location is the cell membrane. Functionally, may have an important role in presynaptic function. May be involved in calcium-dependent neurotransmitter release at nerve endings. The protein is DnaJ homolog subfamily C member 5 of Tetronarce californica (Pacific electric ray).